Reading from the N-terminus, the 488-residue chain is G-patch domain and KOW motifs-containing protein (488 aa).

The span at 1 to 11 shows a compositional bias: pro residues; the sequence is MAGRESPPPSA. A disordered region spans residues 1–20; it reads MAGRESPPPSAPSMAPISFG. Ala-2 carries the post-translational modification N-acetylalanine. A Phosphoserine; by PKA modification is found at Ser-25. The segment at 72–97 is disordered; the sequence is IQNGSRRQPLSKNPKPSSETSTVLMS. The segment covering 73–95 has biased composition (polar residues); the sequence is QNGSRRQPLSKNPKPSSETSTVL. Ser-115 carries the phosphoserine modification. One can recognise a G-patch domain in the interval 164-210; that stretch reads VEAYGLAMLRGMGWKPGKGIGNTFSQVVKPRVNSIRPKGLGLGANRM. 2 disordered regions span residues 216-241 and 295-367; these read ASVG…PQGL and QEFD…PRNK. Residues 224–236 are compositionally biased toward basic and acidic residues; sequence PRPDGDRENDKEG. Residues 231-258 enclose the KOW 1 domain; sequence ENDKEGQPQGLMHGRAVVVLSGPYRGLY. Residues 307 to 331 show a composition bias toward polar residues; that stretch reads VSQTSTEQQNRATGTASSLKAAQNQ. Composition is skewed to basic and acidic residues over residues 332-341 and 349-363; these read EDSKRRQKGS and PDRQ…EKAA. Residues 401–428 form the KOW 2 domain; it reads PDTCVCRTDEGRVLEDVREDMLETLIPK. Ser-485 is modified (phosphoserine).

The protein belongs to the MOS2 family. In terms of assembly, component of the minor spliceosome, which splices U12-type introns. Interacts with PRKX, PRKACB and DHX16. Post-translationally, phosphorylation regulates its ability to bind RNA.

It localises to the nucleus. Its function is as follows. RNA-binding protein involved in pre-mRNA splicing. As a component of the minor spliceosome, involved in the splicing of U12-type introns in pre-mRNAs. The sequence is that of G-patch domain and KOW motifs-containing protein (Gpkow) from Mus musculus (Mouse).